The chain runs to 390 residues: tRNA (guanine(9)-N1)-methyltransferase (390 aa).

The tract at residues 1 to 72 (MDIDEESYLN…RTAQLAEGYA (72 aa)) is disordered. The segment covering 43–59 (ARLEEIKPLKRAAERER) has biased composition (basic and acidic residues). Residues 92–340 (KERKEAQRRI…AVIPIRKYAP (249 aa)) enclose the SAM-dependent MTase TRM10-type domain. S-adenosyl-L-methionine is bound by residues 246–247 (LS), G266, 270–274 (DRNRH), C278, L292, and 305–307 (KVL). The Proton acceptor role is filled by D270. Residues 343–390 (KTKRAKTETKRNEKEEEEVECTSAEGEEDIGVIEESAEVDPEDVFSNQ) are disordered. A compositionally biased stretch (basic and acidic residues) spans 347–356 (AKTETKRNEK). Positions 357-390 (EEEEVECTSAEGEEDIGVIEESAEVDPEDVFSNQ) are enriched in acidic residues.

The protein belongs to the class IV-like SAM-binding methyltransferase superfamily. TRM10 family. In terms of assembly, monomer.

Its subcellular location is the cytoplasm. It localises to the nucleus. It catalyses the reaction guanosine(9) in tRNA + S-adenosyl-L-methionine = N(1)-methylguanosine(9) in tRNA + S-adenosyl-L-homocysteine + H(+). S-adenosyl-L-methionine-dependent guanine N(1)-methyltransferase that catalyzes the formation of N(1)-methylguanine at position 9 (m1G9) in cytoplasmic tRNA. The protein is tRNA (guanine(9)-N1)-methyltransferase of Cryptococcus neoformans var. neoformans serotype D (strain JEC21 / ATCC MYA-565) (Filobasidiella neoformans).